The chain runs to 1135 residues: DNA-directed RNA polymerase subunit beta' (1135 aa).

Zn(2+) contacts are provided by Cys-60, Cys-62, Cys-75, and Cys-78. Mg(2+)-binding residues include Asp-450, Asp-452, and Asp-454. 4 residues coordinate Zn(2+): Cys-795, Cys-869, Cys-876, and Cys-879.

The protein belongs to the RNA polymerase beta' chain family. In terms of assembly, the RNAP catalytic core consists of 2 alpha, 1 beta, 1 beta' and 1 omega subunit. When a sigma factor is associated with the core the holoenzyme is formed, which can initiate transcription. Mg(2+) is required as a cofactor. It depends on Zn(2+) as a cofactor.

It carries out the reaction RNA(n) + a ribonucleoside 5'-triphosphate = RNA(n+1) + diphosphate. DNA-dependent RNA polymerase catalyzes the transcription of DNA into RNA using the four ribonucleoside triphosphates as substrates. This Clostridium tetani (strain Massachusetts / E88) protein is DNA-directed RNA polymerase subunit beta'.